The primary structure comprises 210 residues: Ribosomal RNA large subunit methyltransferase E (210 aa).

5 residues coordinate S-adenosyl-L-methionine: glycine 64, tryptophan 66, aspartate 84, asparagine 100, and aspartate 125. The Proton acceptor role is filled by lysine 165.

This sequence belongs to the class I-like SAM-binding methyltransferase superfamily. RNA methyltransferase RlmE family.

It is found in the cytoplasm. It catalyses the reaction uridine(2552) in 23S rRNA + S-adenosyl-L-methionine = 2'-O-methyluridine(2552) in 23S rRNA + S-adenosyl-L-homocysteine + H(+). Its function is as follows. Specifically methylates the uridine in position 2552 of 23S rRNA at the 2'-O position of the ribose in the fully assembled 50S ribosomal subunit. The chain is Ribosomal RNA large subunit methyltransferase E from Buchnera aphidicola subsp. Baizongia pistaciae (strain Bp).